We begin with the raw amino-acid sequence, 338 residues long: Very-long-chain 3-oxoacyl-CoA reductase (338 aa).

Residues 20 to 40 form a helical membrane-spanning segment; the sequence is LSAFLLVMGSIGVGRVIYQTL. 8 residues coordinate NADP(+): Val-66, Asn-95, Asp-120, Asn-147, Tyr-214, Lys-218, Val-247, and Ser-249. Catalysis depends on Tyr-214, which acts as the Proton donor. The active-site Lowers pKa of active site Tyr is Lys-218.

The protein belongs to the short-chain dehydrogenases/reductases (SDR) family.

The protein localises to the endoplasmic reticulum membrane. The catalysed reaction is a very-long-chain (3R)-3-hydroxyacyl-CoA + NADP(+) = a very-long-chain 3-oxoacyl-CoA + NADPH + H(+). The protein operates within lipid metabolism; fatty acid biosynthesis. Component of the microsomal membrane bound fatty acid elongation system, which produces the 26-carbon very long-chain fatty acids (VLCFA) from palmitate. Catalyzes the reduction of the 3-ketoacyl-CoA intermediate that is formed in each cycle of fatty acid elongation. VLCFAs serve as precursors for ceramide and sphingolipids. The chain is Very-long-chain 3-oxoacyl-CoA reductase from Laccaria bicolor (strain S238N-H82 / ATCC MYA-4686) (Bicoloured deceiver).